The sequence spans 238 residues: MHFEPALDCALLQKRYKRFLADVTYQSGDTGTIHCANTGAMTGCATPGDKVWYSTSNNTKRKYPHSWEITETEQGHLICVNTIRANQLAVEAIEQGWIKELSGYERLQTEVKYGHENSRIDILLSASDRPACYIEVKSVTLLDDTEPGQGFFPDAVTTRGQKHLRELTEMAQNGSRAILLFAVLHSGIEKVAAALHIDAKYSQLLKQAQKAGVEVLCYKAEISNTEIKLNSAIAFNNS.

It belongs to the SfsA family.

The polypeptide is Sugar fermentation stimulation protein homolog (Vibrio vulnificus (strain CMCP6)).